The primary structure comprises 505 residues: MSARITPQTPALQALRMRLHAQHQPVVLMRTDCHVCRAEGLAPRSQVLIIAGDRTVQALLYQIDSDLLKTGQIALSEAAWDALDIHEGDLVQVRHPPLLESLSAVRARIHGHRLQTTELQAIVRDVVDGRYTDVALSAFLTATAVLPLDMQETIHLTRAMVDVGDHLQWQAPIVVDKHCVGGLPGNRTTPLVVAIAAANGLVMPKTSSRAITSPAGTADTMETLAPVDLDLDTLRKVVEKEGGCVAWGGAMHLSPADDIFVRIERELDIDTQGQLIASVLSKKIAAGATHIVIDIPVGPTAKVRSRETAEHLAHHLSEVAASFGLVLRCLFTDGNQPVGRGIGPALEARDVLAVLRNEADAPQDLCDRVALVAGAVLELGGVAKEGDGIRLAHETISSGRAWEKFQRICAAQGGFREPPQALYVEPLLATTTGRAVHIDNRKLSRLAKLAGAPESSAAGIQLQVRLGDEVTSGQPLMFLHAQTSGEMAYALAYVHDIGDIVNIEP.

It belongs to the thymidine/pyrimidine-nucleoside phosphorylase family. Type 2 subfamily.

It carries out the reaction thymidine + phosphate = 2-deoxy-alpha-D-ribose 1-phosphate + thymine. The protein is Putative thymidine phosphorylase of Tolumonas auensis (strain DSM 9187 / NBRC 110442 / TA 4).